Reading from the N-terminus, the 458-residue chain is Monomethylamine methyltransferase MtmB3 (458 aa).

A non-standard amino acid (pyrrolysine) is located at residue O202.

Belongs to the monomethylamine methyltransferase family.

The catalysed reaction is Co(I)-[methylamine-specific corrinoid protein] + methylamine + H(+) = methyl-Co(III)-[methylamine-specific corrinoid protein] + NH4(+). It participates in one-carbon metabolism; methanogenesis from methylamine. In terms of biological role, catalyzes the transfer of the methyl group from monomethylamine to the corrinoid cofactor of MtmC. The chain is Monomethylamine methyltransferase MtmB3 (mtmB3) from Methanosarcina barkeri (strain Fusaro / DSM 804).